The following is a 506-amino-acid chain: Serine/threonine-protein kinase D6PKL1 (506 aa).

The segment at 1-96 (MASKYGSGVL…TCSSFSGNNK (96 aa)) is disordered. The segment covering 12–23 (ENKKEKGDKETP) has biased composition (basic and acidic residues). Positions 24–54 (ETSYSSQSVSVNTLADQVSSTLSFAPSSDSK) are enriched in polar residues. Residues 55-67 (TGGEVKFNEKSDQ) are compositionally biased toward basic and acidic residues. Residues 77 to 92 (STSSDISDESTCSSFS) show a composition bias toward low complexity. Positions 123–456 (FRLLKRLGCG…ATEMKQHPFF (334 aa)) constitute a Protein kinase domain. ATP-binding positions include 129–137 (LGCGDIGTV) and K152. Residue D248 is the Proton acceptor of the active site. Residues 475-495 (PVDYESAPATPAAATSTSVKS) are disordered. Low complexity predominate over residues 480–492 (SAPATPAAATSTS).

Belongs to the protein kinase superfamily. AGC Ser/Thr protein kinase family.

Its subcellular location is the cell membrane. The catalysed reaction is L-seryl-[protein] + ATP = O-phospho-L-seryl-[protein] + ADP + H(+). The enzyme catalyses L-threonyl-[protein] + ATP = O-phospho-L-threonyl-[protein] + ADP + H(+). Functionally, protein kinase that regulates the auxin transport activity of PIN auxin efflux facilitators by direct phosphorylation. D6PK-mediated PIN phosphorylation promotes auxin transport in the hypocotyl and this is a prerequisite for PHOT1-dependent hypocotyl bending. This Arabidopsis thaliana (Mouse-ear cress) protein is Serine/threonine-protein kinase D6PKL1 (D6PKL1).